A 207-amino-acid polypeptide reads, in one-letter code: Urease accessory protein UreG (207 aa).

12 to 19 (GPVGAGKT) provides a ligand contact to GTP.

This sequence belongs to the SIMIBI class G3E GTPase family. UreG subfamily. In terms of assembly, homodimer. UreD, UreF and UreG form a complex that acts as a GTP-hydrolysis-dependent molecular chaperone, activating the urease apoprotein by helping to assemble the nickel containing metallocenter of UreC. The UreE protein probably delivers the nickel.

It is found in the cytoplasm. Facilitates the functional incorporation of the urease nickel metallocenter. This process requires GTP hydrolysis, probably effectuated by UreG. The sequence is that of Urease accessory protein UreG from Cereibacter sphaeroides (strain ATCC 17029 / ATH 2.4.9) (Rhodobacter sphaeroides).